Reading from the N-terminus, the 395-residue chain is HORMA domain-containing protein 1 (395 aa).

An HORMA domain is found at 24-226 (QQSLVLVKRL…TPFHTFKVKV (203 aa)). The segment at 329–395 (DVSESKTRSG…RKFSEPKEYV (67 aa)) is disordered. The segment covering 344–353 (KMANGNQPVK) has biased composition (polar residues). Residues 354-363 (SSKENRKRNQ) are compositionally biased toward basic and acidic residues. Residue serine 377 is modified to Phosphoserine. A Nuclear localization signal motif is present at residues 384-387 (KRRK).

Interacts with HORMAD2. Interacts with IHO1. Post-translationally, phosphorylated at Ser-378 in a SPO11-dependent manner.

It localises to the nucleus. Its subcellular location is the chromosome. Plays a key role in meiotic progression. Regulates 3 different functions during meiosis: ensures that sufficient numbers of processed DNA double-strand breaks (DSBs) are available for successful homology search by increasing the steady-state numbers of single-stranded DSB ends. Promotes synaptonemal-complex formation independently of its role in homology search. Plays a key role in the male mid-pachytene checkpoint and the female meiotic prophase checkpoint: required for efficient build-up of ATR activity on unsynapsed chromosome regions, a process believed to form the basis of meiotic silencing of unsynapsed chromatin (MSUC) and meiotic prophase quality control in both sexes. The sequence is that of HORMA domain-containing protein 1 (HORMAD1) from Canis lupus familiaris (Dog).